Here is a 301-residue protein sequence, read N- to C-terminus: MQTNITSTKMSILVTGGTGVVGRQVVKSLELREKNINIRVGGRDQDKCNQLGFGKNSTFTRFDFMDPTTWDKSLEGVDRVFLIALPMDPTPEKSLGPFIEKCKERKLKKIVVLSVIDAERVPLVKIEQMVQGSGLTFVILRPPFFSENFSEGFMKHDIDQGTIRVPVGEHSVNWISTHDIGECASIVLMDSKFDGRTIEITGPKPINFKELSEVVSKNVGKQIRFEDIKPQEYKKCLMDRGISEPSANYLNELFTSAREDKLSKCTKGVNEITGHDPRSFEQFAKETFSNTSGSCTSKPVI.

Belongs to the NmrA-type oxidoreductase family.

In terms of biological role, involved in development and cell differentiation. This chain is Prestalk A differentiation protein A (padA), found in Dictyostelium discoideum (Social amoeba).